The following is a 204-amino-acid chain: Outer-membrane lipoprotein LolB (204 aa).

The signal sequence occupies residues Met1–Gly16. The N-palmitoyl cysteine moiety is linked to residue Cys17. Cys17 carries S-diacylglycerol cysteine lipidation.

It belongs to the LolB family. As to quaternary structure, monomer.

It is found in the cell outer membrane. In terms of biological role, plays a critical role in the incorporation of lipoproteins in the outer membrane after they are released by the LolA protein. The protein is Outer-membrane lipoprotein LolB of Ectopseudomonas mendocina (strain ymp) (Pseudomonas mendocina).